The following is a 316-amino-acid chain: Methionyl-tRNA formyltransferase (316 aa).

A (6S)-5,6,7,8-tetrahydrofolate-binding site is contributed by 112 to 115 (SLLP).

This sequence belongs to the Fmt family.

The catalysed reaction is L-methionyl-tRNA(fMet) + (6R)-10-formyltetrahydrofolate = N-formyl-L-methionyl-tRNA(fMet) + (6S)-5,6,7,8-tetrahydrofolate + H(+). Attaches a formyl group to the free amino group of methionyl-tRNA(fMet). The formyl group appears to play a dual role in the initiator identity of N-formylmethionyl-tRNA by promoting its recognition by IF2 and preventing the misappropriation of this tRNA by the elongation apparatus. The chain is Methionyl-tRNA formyltransferase from Actinobacillus pleuropneumoniae serotype 5b (strain L20).